A 674-amino-acid polypeptide reads, in one-letter code: tRNA wybutosine-synthesizing protein 4 (674 aa).

S-adenosyl-L-methionine-binding positions include Arg84, Gly109, Asp140, Asp184–Leu185, and Glu212.

Belongs to the methyltransferase superfamily. LCMT family.

It carries out the reaction 7-[(3S)-3-amino-3-carboxypropyl]wyosine(37) in tRNA(Phe) + S-adenosyl-L-methionine = 7-[(3S)-(3-amino-3-methoxycarbonyl)propyl]wyosine(37) in tRNA(Phe) + S-adenosyl-L-homocysteine. The catalysed reaction is 7-[(3S)-(3-amino-3-methoxycarbonyl)propyl]wyosine(37) in tRNA(Phe) + S-adenosyl-L-methionine + CO2 = wybutosine(37) in tRNA(Phe) + S-adenosyl-L-homocysteine + 2 H(+). Its pathway is tRNA modification; wybutosine-tRNA(Phe) biosynthesis. Functionally, probable S-adenosyl-L-methionine-dependent methyltransferase that acts as a component of the wybutosine biosynthesis pathway. Wybutosine is a hyper modified guanosine with a tricyclic base found at the 3'-position adjacent to the anticodon of eukaryotic phenylalanine tRNA. May methylate the carboxyl group of leucine residues to form alpha-leucine ester residues. This Candida glabrata (strain ATCC 2001 / BCRC 20586 / JCM 3761 / NBRC 0622 / NRRL Y-65 / CBS 138) (Yeast) protein is tRNA wybutosine-synthesizing protein 4 (PPM2).